A 392-amino-acid polypeptide reads, in one-letter code: 8-amino-7-oxononanoate synthase 1 (392 aa).

109–110 (GF) contributes to the pyridoxal 5'-phosphate binding site. Residue His134 coordinates substrate. Pyridoxal 5'-phosphate is bound by residues Ser181, 206-209 (DDAH), and 237-240 (TLSK). Lys240 bears the N6-(pyridoxal phosphate)lysine mark. Thr354 serves as a coordination point for substrate.

The protein belongs to the class-II pyridoxal-phosphate-dependent aminotransferase family. BioF subfamily. In terms of assembly, homodimer. Requires pyridoxal 5'-phosphate as cofactor.

The catalysed reaction is 6-carboxyhexanoyl-[ACP] + L-alanine + H(+) = (8S)-8-amino-7-oxononanoate + holo-[ACP] + CO2. It participates in cofactor biosynthesis; biotin biosynthesis. In terms of biological role, catalyzes the decarboxylative condensation of pimeloyl-[acyl-carrier protein] and L-alanine to produce 8-amino-7-oxononanoate (AON), [acyl-carrier protein], and carbon dioxide. The protein is 8-amino-7-oxononanoate synthase 1 (kbl) of Bacillus subtilis (strain 168).